Consider the following 141-residue polypeptide: Period circadian protein (141 aa).

Residues 1–141 (EGSGGSGSSG…VTLTESLLNK (141 aa)) form a disordered region. Polar residues predominate over residues 11-23 (HFTTGSNVHMSSV). Residues 29–68 (GGTGGTGTGTGTGTGTGTGTGTGTGTGTGTGTGTGTGTGT) show a composition bias toward gly residues. Tandem repeats lie at residues 30-31 (GT), 33-34 (GT), 35-36 (GT), 37-38 (GT), 39-40 (GT), 41-42 (GT), 43-44 (GT), 45-46 (GT), 47-48 (GT), 49-50 (GT), 51-52 (GT), 53-54 (GT), 55-56 (GT), 57-58 (GT), 59-60 (GT), 61-62 (GT), 63-64 (GT), 65-66 (GT), and 67-68 (GT). Residues 30 to 94 (GTGGTGTGTG…ANGTGTGKGT (65 aa)) are 32 X 2 AA approximate tandem repeats of G-T. Residues 69–70 (AS) form a 20; approximate repeat. Residues 69-85 (ASGTATGTASGTATGTA) are compositionally biased toward low complexity. Copy 21 of the repeat occupies 71 to 72 (GT). The 22; approximate repeat unit spans residues 73-74 (AT). Repeat 23 spans residues 75–76 (GT). A 24; approximate repeat occupies 77–78 (AS). Repeat unit 25 spans residues 79 to 80 (GT). A 26; approximate repeat occupies 81 to 82 (AT). Repeat unit 27 spans residues 83 to 84 (GT). Residues 85-86 (AN) form a 28; approximate repeat. A run of 2 repeats spans residues 87 to 88 (GT) and 89 to 90 (GT). The 31; approximate repeat unit spans residues 91–92 (GK). Repeat unit 32 spans residues 93-94 (GT). Positions 101 to 113 (SGSGSGTGTGTGT) are enriched in gly residues. Positions 114–129 (GTTTTTTTGNNSSSST) are enriched in low complexity. Over residues 130 to 141 (PPVTLTESLLNK) the composition is skewed to polar residues.

As to quaternary structure, forms a heterodimer with timeless (TIM); the complex then translocates into the nucleus. Phosphorylated with a circadian rhythmicity, probably by the double-time protein (dbt). Phosphorylation could be implicated in the stability of per monomer and in the formation of heterodimer per-tim.

The protein resides in the nucleus. It localises to the cytoplasm. The protein localises to the perinuclear region. Essential for biological clock functions. Determines the period length of circadian and ultradian rhythms; an increase in PER dosage leads to shortened circadian rhythms and a decrease leads to lengthened circadian rhythms. Essential for the circadian rhythmicity of locomotor activity, eclosion behavior, and for the rhythmic component of the male courtship song that originates in the thoracic nervous system. The biological cycle depends on the rhythmic formation and nuclear localization of the TIM-PER complex. Light induces the degradation of TIM, which promotes elimination of PER. Nuclear activity of the heterodimer coordinatively regulates PER and TIM transcription through a negative feedback loop. Behaves as a negative element in circadian transcriptional loop. Does not appear to bind DNA, suggesting indirect transcriptional inhibition. This is Period circadian protein (per) from Drosophila serrata (Fruit fly).